Reading from the N-terminus, the 212-residue chain is Uridine kinase (212 aa).

13–20 (GASASGKS) is an ATP binding site.

This sequence belongs to the uridine kinase family.

The protein resides in the cytoplasm. The catalysed reaction is uridine + ATP = UMP + ADP + H(+). It carries out the reaction cytidine + ATP = CMP + ADP + H(+). The protein operates within pyrimidine metabolism; CTP biosynthesis via salvage pathway; CTP from cytidine: step 1/3. It functions in the pathway pyrimidine metabolism; UMP biosynthesis via salvage pathway; UMP from uridine: step 1/1. This Shewanella oneidensis (strain ATCC 700550 / JCM 31522 / CIP 106686 / LMG 19005 / NCIMB 14063 / MR-1) protein is Uridine kinase.